A 178-amino-acid chain; its full sequence is Large ribosomal subunit protein bL25 (178 aa).

It belongs to the bacterial ribosomal protein bL25 family. CTC subfamily. Part of the 50S ribosomal subunit; part of the 5S rRNA/L5/L18/L25 subcomplex. Contacts the 5S rRNA. Binds to the 5S rRNA independently of L5 and L18.

Functionally, this is one of the proteins that binds to the 5S RNA in the ribosome where it forms part of the central protuberance. The sequence is that of Large ribosomal subunit protein bL25 from Wolinella succinogenes (strain ATCC 29543 / DSM 1740 / CCUG 13145 / JCM 31913 / LMG 7466 / NCTC 11488 / FDC 602W) (Vibrio succinogenes).